A 401-amino-acid polypeptide reads, in one-letter code: Phosphoglycerate kinase (401 aa).

Substrate-binding positions include 20–22 (DFN), arginine 35, 58–61 (HLGR), arginine 117, and arginine 154. Residues lysine 204, glycine 298, glutamate 329, and 358-361 (GGDS) each bind ATP.

It belongs to the phosphoglycerate kinase family. Monomer.

It localises to the cytoplasm. The enzyme catalyses (2R)-3-phosphoglycerate + ATP = (2R)-3-phospho-glyceroyl phosphate + ADP. The protein operates within carbohydrate degradation; glycolysis; pyruvate from D-glyceraldehyde 3-phosphate: step 2/5. The polypeptide is Phosphoglycerate kinase (Bifidobacterium longum subsp. infantis (strain ATCC 15697 / DSM 20088 / JCM 1222 / NCTC 11817 / S12)).